The sequence spans 520 residues: AarF domain-containing protein kinase 1 (520 aa).

A Protein kinase domain is found at glutamate 148–phenylalanine 455. ATP is bound by residues leucine 154–valine 162 and lysine 176. The Proton acceptor role is filled by aspartate 308.

It belongs to the protein kinase superfamily. ADCK protein kinase family.

Its subcellular location is the mitochondrion. Appears to be essential for maintaining mitochondrial cristae formation and mitochondrial function by acting via YME1L1 in a kinase-independent manner to regulate essential mitochondrial structural proteins OPA1 and IMMT. The action of this enzyme is not yet clear. It is not known if it has protein kinase activity and what type of substrate it would phosphorylate (Ser, Thr or Tyr). The protein is AarF domain-containing protein kinase 1 (adck1) of Xenopus laevis (African clawed frog).